The following is an 887-amino-acid chain: Pyruvate dehydrogenase E1 component (887 aa).

D231, N261, and Q263 together coordinate Mg(2+). Residue K716 is modified to N6-acetyllysine.

As to quaternary structure, homodimer. Part of the PDH complex, consisting of multiple copies of pyruvate dehydrogenase (E1), dihydrolipoamide acetyltransferase (E2) and lipoamide dehydrogenase (E3). Mg(2+) serves as cofactor. The cofactor is thiamine diphosphate.

The enzyme catalyses N(6)-[(R)-lipoyl]-L-lysyl-[protein] + pyruvate + H(+) = N(6)-[(R)-S(8)-acetyldihydrolipoyl]-L-lysyl-[protein] + CO2. In terms of biological role, component of the pyruvate dehydrogenase (PDH) complex, that catalyzes the overall conversion of pyruvate to acetyl-CoA and CO(2). The protein is Pyruvate dehydrogenase E1 component (aceE) of Escherichia coli O157:H7.